The chain runs to 578 residues: Rhamnogalacturonate lyase (578 aa).

Positions 1 to 27 (MHMNKPLQAWRTPLLTLIFVLPLTATG) are cleaved as a signal peptide.

It belongs to the polysaccharide lyase 4 family.

The protein localises to the secreted. It carries out the reaction Endotype eliminative cleavage of L-alpha-rhamnopyranosyl-(1-&gt;4)-alpha-D-galactopyranosyluronic acid bonds of rhamnogalacturonan I domains in ramified hairy regions of pectin leaving L-rhamnopyranose at the reducing end and 4-deoxy-4,5-unsaturated D-galactopyranosyluronic acid at the non-reducing end.. Its function is as follows. Degrades the rhamnogalacturonan I (RG-I) backbone of pectin. Is required for the full virulence of E.chrysanthemi strain 3937 as it is involved in rotting of plant tissue. The polypeptide is Rhamnogalacturonate lyase (rhiE) (Dickeya dadantii (strain 3937) (Erwinia chrysanthemi (strain 3937))).